We begin with the raw amino-acid sequence, 712 residues long: UvrABC system protein B (712 aa).

The 387-residue stretch at 35 to 421 (RRVQAGEKDV…SDGAVEQIIR (387 aa)) folds into the Helicase ATP-binding domain. 48–55 (GATGTGKS) serves as a coordination point for ATP. Positions 101-124 (YYDYYQPEAYVPQSDTYIEKDSSI) match the Beta-hairpin motif. Positions 438 to 604 (QIDDLVHEIR…PLRKKINDIV (167 aa)) constitute a Helicase C-terminal domain. Positions 625–655 (TKEGKGAKAPVPALGGQKTGGAKAARGRAKE) are disordered. Residues 667–702 (AEQIEDLTTRMRAAAADLQFEIAARLRDEVSEMKKE) enclose the UVR domain.

This sequence belongs to the UvrB family. In terms of assembly, forms a heterotetramer with UvrA during the search for lesions. Interacts with UvrC in an incision complex.

The protein localises to the cytoplasm. Its function is as follows. The UvrABC repair system catalyzes the recognition and processing of DNA lesions. A damage recognition complex composed of 2 UvrA and 2 UvrB subunits scans DNA for abnormalities. Upon binding of the UvrA(2)B(2) complex to a putative damaged site, the DNA wraps around one UvrB monomer. DNA wrap is dependent on ATP binding by UvrB and probably causes local melting of the DNA helix, facilitating insertion of UvrB beta-hairpin between the DNA strands. Then UvrB probes one DNA strand for the presence of a lesion. If a lesion is found the UvrA subunits dissociate and the UvrB-DNA preincision complex is formed. This complex is subsequently bound by UvrC and the second UvrB is released. If no lesion is found, the DNA wraps around the other UvrB subunit that will check the other stand for damage. The protein is UvrABC system protein B of Streptomyces coelicolor (strain ATCC BAA-471 / A3(2) / M145).